Here is a 255-residue protein sequence, read N- to C-terminus: Hydroxyacylglutathione hydrolase (255 aa).

Positions 56, 58, 60, 61, 114, 133, and 171 each coordinate Zn(2+).

It belongs to the metallo-beta-lactamase superfamily. Glyoxalase II family. In terms of assembly, monomer. It depends on Zn(2+) as a cofactor.

The enzyme catalyses an S-(2-hydroxyacyl)glutathione + H2O = a 2-hydroxy carboxylate + glutathione + H(+). Its pathway is secondary metabolite metabolism; methylglyoxal degradation; (R)-lactate from methylglyoxal: step 2/2. Thiolesterase that catalyzes the hydrolysis of S-D-lactoyl-glutathione to form glutathione and D-lactic acid. The sequence is that of Hydroxyacylglutathione hydrolase from Rhodopseudomonas palustris (strain ATCC BAA-98 / CGA009).